Consider the following 90-residue polypeptide: Small ribosomal subunit protein uS15c (90 aa).

The protein belongs to the universal ribosomal protein uS15 family. In terms of assembly, part of the 30S ribosomal subunit.

It is found in the plastid. The protein resides in the chloroplast. The polypeptide is Small ribosomal subunit protein uS15c (rps15) (Dioscorea elephantipes (Elephant's foot yam)).